Here is a 259-residue protein sequence, read N- to C-terminus: Protein BEAN1 (259 aa).

Residues 36 to 56 (VLVASAVIGVVIILSCITIIV) traverse the membrane as a helical segment. The span at 71 to 89 (RHRHHRHHHHHHHHRRRRH) shows a compositional bias: basic residues. Disordered stretches follow at residues 71 to 91 (RHRHHRHHHHHHHHRRRRHRE) and 152 to 259 (VGPG…ERIV). The span at 171 to 187 (LTDSCPTLDGTSDSGSG) shows a compositional bias: polar residues. The span at 221–230 (GAGPPSGLLP) shows a compositional bias: low complexity.

As to quaternary structure, interacts with NEDD4.

The protein localises to the membrane. The sequence is that of Protein BEAN1 (BEAN1) from Homo sapiens (Human).